We begin with the raw amino-acid sequence, 416 residues long: Glutamyl-tRNA reductase (416 aa).

Residues 49-52 (TCNR), Ser-105, 110-112 (EPQ), and Gln-116 contribute to the substrate site. Cys-50 (nucleophile) is an active-site residue. 185–190 (GAGETI) provides a ligand contact to NADP(+).

The protein belongs to the glutamyl-tRNA reductase family. In terms of assembly, homodimer.

The catalysed reaction is (S)-4-amino-5-oxopentanoate + tRNA(Glu) + NADP(+) = L-glutamyl-tRNA(Glu) + NADPH + H(+). The protein operates within porphyrin-containing compound metabolism; protoporphyrin-IX biosynthesis; 5-aminolevulinate from L-glutamyl-tRNA(Glu): step 1/2. In terms of biological role, catalyzes the NADPH-dependent reduction of glutamyl-tRNA(Glu) to glutamate 1-semialdehyde (GSA). The sequence is that of Glutamyl-tRNA reductase from Shewanella baltica (strain OS185).